Here is an 862-residue protein sequence, read N- to C-terminus: Alanine--tRNA ligase (862 aa).

Zn(2+)-binding residues include His552, His556, Cys653, and His657.

Belongs to the class-II aminoacyl-tRNA synthetase family. Requires Zn(2+) as cofactor.

The protein localises to the cytoplasm. It carries out the reaction tRNA(Ala) + L-alanine + ATP = L-alanyl-tRNA(Ala) + AMP + diphosphate. In terms of biological role, catalyzes the attachment of alanine to tRNA(Ala) in a two-step reaction: alanine is first activated by ATP to form Ala-AMP and then transferred to the acceptor end of tRNA(Ala). Also edits incorrectly charged Ser-tRNA(Ala) and Gly-tRNA(Ala) via its editing domain. This Nitrosospira multiformis (strain ATCC 25196 / NCIMB 11849 / C 71) protein is Alanine--tRNA ligase.